We begin with the raw amino-acid sequence, 185 residues long: Ribosome-recycling factor (185 aa).

It belongs to the RRF family.

The protein resides in the cytoplasm. Its function is as follows. Responsible for the release of ribosomes from messenger RNA at the termination of protein biosynthesis. May increase the efficiency of translation by recycling ribosomes from one round of translation to another. The chain is Ribosome-recycling factor from Neisseria gonorrhoeae (strain ATCC 700825 / FA 1090).